Consider the following 355-residue polypeptide: Putative L-lysine 2,3-aminomutase (355 aa).

The region spanning V93–P308 is the Radical SAM core domain. [4Fe-4S] cluster contacts are provided by C108, C112, and C115. K320 carries the post-translational modification N6-(pyridoxal phosphate)lysine.

It belongs to the radical SAM superfamily. KamA family. The cofactor is [4Fe-4S] cluster. It depends on pyridoxal 5'-phosphate as a cofactor.

This Treponema pallidum (strain Nichols) protein is Putative L-lysine 2,3-aminomutase.